Here is a 115-residue protein sequence, read N- to C-terminus: MVAAKKTKKSLESINSRLQLVMKSGKYVLGYKQTLKMIRQGKAKLVILANNCPALRKSEIEYYAMLAKTGVHHYSGNNIELGTACGKYYRVCTLAIIDPGDSDIIRSMPEQTSEK.

This sequence belongs to the eukaryotic ribosomal protein eL30 family. In terms of assembly, component of the large ribosomal subunit.

Its subcellular location is the cytoplasm. Component of the large ribosomal subunit. The ribosome is a large ribonucleoprotein complex responsible for the synthesis of proteins in the cell. This chain is Large ribosomal subunit protein eL30 (RPL30), found in Gallus gallus (Chicken).